We begin with the raw amino-acid sequence, 170 residues long: 3-hydroxydecanoyl-[acyl-carrier-protein] dehydratase (170 aa).

His69 is a catalytic residue.

The protein belongs to the thioester dehydratase family. FabA subfamily. Homodimer.

The protein localises to the cytoplasm. It catalyses the reaction a (3R)-hydroxyacyl-[ACP] = a (2E)-enoyl-[ACP] + H2O. The catalysed reaction is (3R)-hydroxydecanoyl-[ACP] = (2E)-decenoyl-[ACP] + H2O. The enzyme catalyses (2E)-decenoyl-[ACP] = (3Z)-decenoyl-[ACP]. Its pathway is lipid metabolism; fatty acid biosynthesis. Necessary for the introduction of cis unsaturation into fatty acids. Catalyzes the dehydration of (3R)-3-hydroxydecanoyl-ACP to E-(2)-decenoyl-ACP and then its isomerization to Z-(3)-decenoyl-ACP. Can catalyze the dehydratase reaction for beta-hydroxyacyl-ACPs with saturated chain lengths up to 16:0, being most active on intermediate chain length. This chain is 3-hydroxydecanoyl-[acyl-carrier-protein] dehydratase, found in Caulobacter vibrioides (strain ATCC 19089 / CIP 103742 / CB 15) (Caulobacter crescentus).